Reading from the N-terminus, the 362-residue chain is Phospho-N-acetylmuramoyl-pentapeptide-transferase (362 aa).

The next 10 membrane-spanning stretches (helical) occupy residues 28–48 (AACM…IRWL), 72–92 (GTPT…TLLW), 100–120 (VWAV…DDYL), 134–154 (VKLI…MSLT), 170–190 (VLIP…MGAS), 201–221 (GLAI…AYLV), 241–261 (LTVF…FNAP), 265–285 (VFMG…VAIA), 290–310 (IVLA…IVQV), and 339–359 (TIVI…LATL).

Belongs to the glycosyltransferase 4 family. MraY subfamily. Requires Mg(2+) as cofactor.

The protein resides in the cell inner membrane. The enzyme catalyses UDP-N-acetyl-alpha-D-muramoyl-L-alanyl-gamma-D-glutamyl-meso-2,6-diaminopimeloyl-D-alanyl-D-alanine + di-trans,octa-cis-undecaprenyl phosphate = di-trans,octa-cis-undecaprenyl diphospho-N-acetyl-alpha-D-muramoyl-L-alanyl-D-glutamyl-meso-2,6-diaminopimeloyl-D-alanyl-D-alanine + UMP. It participates in cell wall biogenesis; peptidoglycan biosynthesis. In terms of biological role, catalyzes the initial step of the lipid cycle reactions in the biosynthesis of the cell wall peptidoglycan: transfers peptidoglycan precursor phospho-MurNAc-pentapeptide from UDP-MurNAc-pentapeptide onto the lipid carrier undecaprenyl phosphate, yielding undecaprenyl-pyrophosphoryl-MurNAc-pentapeptide, known as lipid I. The sequence is that of Phospho-N-acetylmuramoyl-pentapeptide-transferase from Granulibacter bethesdensis (strain ATCC BAA-1260 / CGDNIH1).